The primary structure comprises 169 residues: Crossover junction endodeoxyribonuclease RuvC (169 aa).

Catalysis depends on residues aspartate 11, glutamate 71, and aspartate 143. Aspartate 11, glutamate 71, and aspartate 143 together coordinate Mg(2+).

This sequence belongs to the RuvC family. In terms of assembly, homodimer which binds Holliday junction (HJ) DNA. The HJ becomes 2-fold symmetrical on binding to RuvC with unstacked arms; it has a different conformation from HJ DNA in complex with RuvA. In the full resolvosome a probable DNA-RuvA(4)-RuvB(12)-RuvC(2) complex forms which resolves the HJ. Mg(2+) serves as cofactor.

It is found in the cytoplasm. The catalysed reaction is Endonucleolytic cleavage at a junction such as a reciprocal single-stranded crossover between two homologous DNA duplexes (Holliday junction).. Its function is as follows. The RuvA-RuvB-RuvC complex processes Holliday junction (HJ) DNA during genetic recombination and DNA repair. Endonuclease that resolves HJ intermediates. Cleaves cruciform DNA by making single-stranded nicks across the HJ at symmetrical positions within the homologous arms, yielding a 5'-phosphate and a 3'-hydroxyl group; requires a central core of homology in the junction. The consensus cleavage sequence is 5'-(A/T)TT(C/G)-3'. Cleavage occurs on the 3'-side of the TT dinucleotide at the point of strand exchange. HJ branch migration catalyzed by RuvA-RuvB allows RuvC to scan DNA until it finds its consensus sequence, where it cleaves and resolves the cruciform DNA. This chain is Crossover junction endodeoxyribonuclease RuvC, found in Bartonella henselae (strain ATCC 49882 / DSM 28221 / CCUG 30454 / Houston 1) (Rochalimaea henselae).